The chain runs to 336 residues: MFVNSDNYIKYLKLWLITLFSLIVLMVAVGGLTRLTDSGLSITAWELFTGILPPMNINEWNFYFTEYKKIPEYKNINYGMSLDEFKVIFYWEYAHRLLARFVGLFTLVPLLFFTLYFKKTLHYSNKYYWIFFLVCLQGFIGWYMVSSGLIENNDVSHFRLSIHLSLALFILCLIFWYILDIHKIKKFENKIPNLFLLFILKLIVLQIVLGAFLSGLDGGLIYNSWPDMNGSFFPNDVSYGDLITTQLFNNPSIIQFLHRSTAYLLLFFIIILNFIYFKKQYDFKYVLFFDVAILFQIFLGIITLISGVEITYASLHQLGSILVLSSYFLILYKNSN.

8 consecutive transmembrane segments (helical) span residues 12–32, 97–117, 130–150, 161–181, 194–214, 256–276, 285–305, and 310–330; these read LKLWLITLFSLIVLMVAVGGL, LLARFVGLFTLVPLLFFTLYF, IFFLVCLQGFIGWYMVSSGLI, SIHLSLALFILCLIFWYILDI, LFLLFILKLIVLQIVLGAFLS, FLHRSTAYLLLFFIIILNFIY, YVLFFDVAILFQIFLGIITLI, and ITYASLHQLGSILVLSSYFLI. Histidine 258 serves as a coordination point for heme. Heme is bound at residue histidine 316.

Belongs to the COX15/CtaA family. Type 2 subfamily. Interacts with CtaB. The cofactor is heme b.

It localises to the cell membrane. It catalyses the reaction Fe(II)-heme o + 2 A + H2O = Fe(II)-heme a + 2 AH2. It functions in the pathway porphyrin-containing compound metabolism; heme A biosynthesis; heme A from heme O: step 1/1. Catalyzes the conversion of heme O to heme A by two successive hydroxylations of the methyl group at C8. The first hydroxylation forms heme I, the second hydroxylation results in an unstable dihydroxymethyl group, which spontaneously dehydrates, resulting in the formyl group of heme A. This chain is Heme A synthase, found in Pelagibacter ubique (strain HTCC1062).